We begin with the raw amino-acid sequence, 274 residues long: Undecaprenyl-diphosphatase 2 (274 aa).

Transmembrane regions (helical) follow at residues 47–64, 82–102, 110–130, 185–205, 219–239, and 249–269; these read VFVIVIQLGAILAVCWEY, WKFVTNLLIAFLPAVVLGLTF, LFSPVPVATAFIVGGLVILWA, ATEFSFFLAIPTLTAASLYDL, LMAVGFVVSFLSALVAVRGLI, and VFAWYRIAFGLVVLATAWSGL.

This sequence belongs to the UppP family.

The protein resides in the cell inner membrane. It catalyses the reaction di-trans,octa-cis-undecaprenyl diphosphate + H2O = di-trans,octa-cis-undecaprenyl phosphate + phosphate + H(+). Functionally, catalyzes the dephosphorylation of undecaprenyl diphosphate (UPP). Confers resistance to bacitracin. The protein is Undecaprenyl-diphosphatase 2 of Rhodospirillum rubrum (strain ATCC 11170 / ATH 1.1.1 / DSM 467 / LMG 4362 / NCIMB 8255 / S1).